We begin with the raw amino-acid sequence, 153 residues long: Heavy metal-associated isoprenylated plant protein 25 (153 aa).

In terms of domain architecture, HMA spans 24–88 (LQTVDVRVLI…IIHRTGKRAE (65 aa)). A metal cation contacts are provided by Cys35 and Cys38. Cys150 carries the cysteine methyl ester modification. The S-farnesyl cysteine moiety is linked to residue Cys150. Positions 151–153 (VVM) are cleaved as a propeptide — removed in mature form.

Belongs to the HIPP family. In terms of tissue distribution, expressed in roots, shoot apical meristem, trichomes and flower buds.

Its subcellular location is the membrane. Its function is as follows. Heavy-metal-binding protein. Binds cadmium. May be involved in cadmium transport and play a role in cadmium detoxification. This is Heavy metal-associated isoprenylated plant protein 25 from Arabidopsis thaliana (Mouse-ear cress).